The following is a 642-amino-acid chain: Threonine--tRNA ligase (642 aa).

Positions 1-61 (MPVITLPDGS…ETDAELSIIT (61 aa)) constitute a TGS domain. The tract at residues 243–534 (DHRKIGKQLD…LIEEYAGRFP (292 aa)) is catalytic. Cys-334, His-385, and His-511 together coordinate Zn(2+).

This sequence belongs to the class-II aminoacyl-tRNA synthetase family. As to quaternary structure, homodimer. Zn(2+) serves as cofactor.

The protein localises to the cytoplasm. It carries out the reaction tRNA(Thr) + L-threonine + ATP = L-threonyl-tRNA(Thr) + AMP + diphosphate + H(+). Functionally, catalyzes the attachment of threonine to tRNA(Thr) in a two-step reaction: L-threonine is first activated by ATP to form Thr-AMP and then transferred to the acceptor end of tRNA(Thr). Also edits incorrectly charged L-seryl-tRNA(Thr). This is Threonine--tRNA ligase from Shewanella sp. (strain ANA-3).